Reading from the N-terminus, the 167-residue chain is Small ribosomal subunit protein uS5 (167 aa).

The region spanning 11–74 (LQEKLIAVNR…EKARRNMINV (64 aa)) is the S5 DRBM domain.

It belongs to the universal ribosomal protein uS5 family. Part of the 30S ribosomal subunit. Contacts proteins S4 and S8.

In terms of biological role, with S4 and S12 plays an important role in translational accuracy. Its function is as follows. Located at the back of the 30S subunit body where it stabilizes the conformation of the head with respect to the body. The polypeptide is Small ribosomal subunit protein uS5 (Escherichia coli O139:H28 (strain E24377A / ETEC)).